A 463-amino-acid polypeptide reads, in one-letter code: Heterogeneous nuclear ribonucleoprotein K (463 aa).

Methionine 1 carries the post-translational modification N-acetylmethionine. Positions 1 to 37 are disordered; that stretch reads METEQPEETFPNTETNGEFGKRPAEDMEEEQAFKRSR. Residues 1–276 are necessary for interaction with DDX1; it reads METEQPEETF…GRGGRPMPPS (276 aa). The segment covering 19–37 has biased composition (basic and acidic residues); the sequence is FGKRPAEDMEEEQAFKRSR. N6-acetyllysine; alternate is present on lysine 34. Lysine 34 is covalently cross-linked (Glycyl lysine isopeptide (Lys-Gly) (interchain with G-Cter in SUMO1); alternate). Lysine 34 is covalently cross-linked (Glycyl lysine isopeptide (Lys-Gly) (interchain with G-Cter in SUMO2); alternate). The interval 35–197 is interaction with ASFV p30; sequence RSRNTDEMVE…STDRVVLIGG (163 aa). Serine 36 bears the Phosphoserine mark. A Phosphothreonine modification is found at threonine 39. The KH 1 domain maps to 42 to 104; that stretch reads MVELRILLQS…ETIGEILKKI (63 aa). Residues lysine 52 and lysine 60 each participate in a glycyl lysine isopeptide (Lys-Gly) (interchain with G-Cter in SUMO2) cross-link. 2 consecutive repeat copies span residues 54-76 and 59-62. Residues 54–421 are 2 X 22 AA approximate repeats; sequence AGAVIGKGGK…QIRHESGASI (368 aa). Residues 59-407 form a 5 X 4 AA repeats of G-X-G-G region; that stretch reads GKGGKNIKAL…LAGSIIGKGG (349 aa). A phosphoserine mark is found at serine 75 and serine 116. The 66-residue stretch at 144-209 folds into the KH 2 domain; that stretch reads DCELRLLIHQ…DRVVECIKII (66 aa). Residue lysine 163 forms a Glycyl lysine isopeptide (Lys-Gly) (interchain with G-Cter in SUMO1); alternate linkage. A Glycyl lysine isopeptide (Lys-Gly) (interchain with G-Cter in SUMO2); alternate cross-link involves residue lysine 163. Lysine 198 carries the N6-acetyllysine modification. The interval 209-337 is interaction with ZIK1; sequence ILDLISESPI…RPGDRYDGMV (129 aa). Residues serine 214 and serine 216 each carry the phosphoserine modification. Residue lysine 219 forms a Glycyl lysine isopeptide (Lys-Gly) (interchain with G-Cter in SUMO2); alternate linkage. Lysine 219 is subject to N6-succinyllysine; alternate. An RNA-binding RGG-box region spans residues 236 to 273; the sequence is YGGFTMMFDDRRGRPVGFPMRGRGGFDRMPPGRGGRPM. 3 consecutive repeat copies span residues 245–250, 257–260, and 267–270. The segment at 245–329 is 2 X 6 AA approximate repeats; sequence DRRGRPVGFP…LMAYDRRGRP (85 aa). Residues 250-329 form a disordered region; the sequence is PVGFPMRGRG…LMAYDRRGRP (80 aa). Residues 252–266 are compositionally biased toward low complexity; the sequence is GFPMRGRGGFDRMPP. Basic and acidic residues predominate over residues 276-285; sequence SRRDYDDMSP. A Phosphoserine modification is found at serine 284. A 3-4 repeat occupies 295–298; it reads GRGG. Arginine 316 bears the Omega-N-methylarginine mark. Residues 324–329 form a 2-2 repeat; the sequence is DRRGRP. An Omega-N-methylarginine modification is found at arginine 377. At serine 379 the chain carries Phosphoserine. Residue tyrosine 380 is modified to Phosphotyrosine. The 65-residue stretch at 387-451 folds into the KH 3 domain; the sequence is IITTQVTIPK…DQIQNAQYLL (65 aa). Tandem repeats lie at residues 399–421 and 404–407. N6-acetyllysine; alternate is present on lysine 405. Lysine 405 is covalently cross-linked (Glycyl lysine isopeptide (Lys-Gly) (interchain with G-Cter in SUMO2); alternate). A Phosphoserine modification is found at serine 420. Residue lysine 422 forms a Glycyl lysine isopeptide (Lys-Gly) (interchain with G-Cter in SUMO1); alternate linkage. Residue lysine 422 forms a Glycyl lysine isopeptide (Lys-Gly) (interchain with G-Cter in SUMO2); alternate linkage. Lysine 422 participates in a covalent cross-link: Glycyl lysine isopeptide (Lys-Gly) (interchain with G-Cter in SUMO); alternate.

As to quaternary structure, identified in the spliceosome C complex. Part of a transcription inhibitory ribonucleoprotein complex composed at least of the circular RNA circZNF827, ZNF827 and HNRNPL. Interacts with RBM42 and ZIK1. Interacts with BRDT. Interacts with ANKRD28. Interacts with ASFV p30 protein. Interacts with DDX1. Interacts with MDM2; this interaction leads to ubiquitination and proteasomal degradation. Interacts with p53/TP53. Interacts with IVNS1ABP (via BACK domain); the interaction is direct. Interacts with PPIA/CYPA. (Microbial infection) Interacts with HCV core protein. Post-translationally, arg-296 and Arg-299 are dimethylated, probably to asymmetric dimethylarginine. In terms of processing, sumoylated by CBX4. Sumoylation is increased upon DNA damage, such as that produced by doxorubicin, etoposide, UV light and camptothecin, due to enhanced CBX4 phosphorylation by HIPK2 under these conditions. Ubiquitinated by MDM2. Doxorubicin treatment does not affect monoubiquitination, but slightly decreases HNRNPK poly-ubiquitination. Post-translationally, O-glycosylated (O-GlcNAcylated), in a cell cycle-dependent manner.

The protein resides in the cytoplasm. Its subcellular location is the nucleus. The protein localises to the nucleoplasm. It localises to the cell projection. It is found in the podosome. Its function is as follows. One of the major pre-mRNA-binding proteins. Binds tenaciously to poly(C) sequences. Likely to play a role in the nuclear metabolism of hnRNAs, particularly for pre-mRNAs that contain cytidine-rich sequences. Can also bind poly(C) single-stranded DNA. Plays an important role in p53/TP53 response to DNA damage, acting at the level of both transcription activation and repression. When sumoylated, acts as a transcriptional coactivator of p53/TP53, playing a role in p21/CDKN1A and 14-3-3 sigma/SFN induction. As far as transcription repression is concerned, acts by interacting with long intergenic RNA p21 (lincRNA-p21), a non-coding RNA induced by p53/TP53. This interaction is necessary for the induction of apoptosis, but not cell cycle arrest. As part of a ribonucleoprotein complex composed at least of ZNF827, HNRNPL and the circular RNA circZNF827 that nucleates the complex on chromatin, may negatively regulate the transcription of genes involved in neuronal differentiation. This is Heterogeneous nuclear ribonucleoprotein K (HNRNPK) from Homo sapiens (Human).